The following is a 332-amino-acid chain: Inositol 2-dehydrogenase 2 (332 aa).

This sequence belongs to the Gfo/Idh/MocA family. Homotetramer.

It carries out the reaction myo-inositol + NAD(+) = scyllo-inosose + NADH + H(+). In terms of biological role, involved in the oxidation of myo-inositol (MI) to 2-keto-myo-inositol (2KMI or 2-inosose). The polypeptide is Inositol 2-dehydrogenase 2 (Paenarthrobacter aurescens (strain TC1)).